A 79-amino-acid chain; its full sequence is Probable 26S proteasome complex subunit sem1 (79 aa).

Residues 1 to 21 (MSAPDKEKEKEKEETNNKSED) show a composition bias toward basic and acidic residues. A disordered region spans residues 1–30 (MSAPDKEKEKEKEETNNKSEDLGLLEEDDE). Position 19 is a phosphoserine (Ser-19).

It belongs to the DSS1/SEM1 family. Part of the 26S proteasome.

Its function is as follows. Subunit of the 26S proteasome which plays a role in ubiquitin-dependent proteolysis. This is Probable 26S proteasome complex subunit sem1 from Drosophila melanogaster (Fruit fly).